We begin with the raw amino-acid sequence, 194 residues long: Large ribosomal subunit protein uL5 (194 aa).

It belongs to the universal ribosomal protein uL5 family. As to quaternary structure, part of the 50S ribosomal subunit; part of the 5S rRNA/L5/L18/L25 subcomplex. Contacts the 5S rRNA and the P site tRNA. Forms a bridge to the 30S subunit in the 70S ribosome.

This is one of the proteins that bind and probably mediate the attachment of the 5S RNA into the large ribosomal subunit, where it forms part of the central protuberance. In the 70S ribosome it contacts protein S13 of the 30S subunit (bridge B1b), connecting the 2 subunits; this bridge is implicated in subunit movement. Contacts the P site tRNA; the 5S rRNA and some of its associated proteins might help stabilize positioning of ribosome-bound tRNAs. In Chlorobium luteolum (strain DSM 273 / BCRC 81028 / 2530) (Pelodictyon luteolum), this protein is Large ribosomal subunit protein uL5.